A 153-amino-acid polypeptide reads, in one-letter code: MSHPAYELPIDVNQIQALIPHRYPFLLIDRVIELDLEAKRIVGQKNVSINEPFFQGHFPTRPVMPGVLIIEALAQAGGVMTQLGLGRDALSKLFYMVKVDNARFNKQVVPGDVLILEVQMKRLIRNMGCYYGEAKVNGEIVASAEIMCAAARE.

Residue His57 is part of the active site.

Belongs to the thioester dehydratase family. FabZ subfamily.

It is found in the cytoplasm. It carries out the reaction a (3R)-hydroxyacyl-[ACP] = a (2E)-enoyl-[ACP] + H2O. In terms of biological role, involved in unsaturated fatty acids biosynthesis. Catalyzes the dehydration of short chain beta-hydroxyacyl-ACPs and long chain saturated and unsaturated beta-hydroxyacyl-ACPs. The polypeptide is 3-hydroxyacyl-[acyl-carrier-protein] dehydratase FabZ (Xanthomonas oryzae pv. oryzae (strain MAFF 311018)).